The chain runs to 691 residues: Solute carrier family 28 member 3 (691 aa).

The tract at residues Met-1 to Gln-78 is disordered. Over Met-1 to Arg-102 the chain is Cytoplasmic. Low complexity predominate over residues Asn-21–Asn-30. Residues Thr-31–Val-42 show a composition bias toward polar residues. Over residues Gln-43–Glu-54 the composition is skewed to basic and acidic residues. The chain crosses the membrane as a helical span at residues His-103–Leu-123. The Extracellular portion of the chain corresponds to Asn-124 to Ala-128. The chain crosses the membrane as a helical span at residues Leu-129–Ala-149. Residues Lys-150–Leu-173 lie on the Cytoplasmic side of the membrane. The helical transmembrane segment at Lys-174–Ala-194 threads the bilayer. At Lys-195–Gly-197 the chain is on the extracellular side. A helical membrane pass occupies residues Gln-198–Lys-219. Over Tyr-220–Arg-227 the chain is Cytoplasmic. Residues Pro-228–Asp-247 traverse the membrane as a helical segment. Residues Pro-248–Phe-284 are Extracellular-facing. The chain crosses the membrane as a helical span at residues Ala-285 to Leu-305. Over Gly-306–Glu-329 the chain is Cytoplasmic. An intramembrane region (helical) is located at residues Ser-330 to Val-348. Residues Arg-349–His-361 are Cytoplasmic-facing. Residues Ala-362 to Val-384 traverse the membrane as a helical segment. Residues Pro-385–Ser-386 are Extracellular-facing. A helical membrane pass occupies residues Ser-387–Trp-408. Topologically, residues Pro-409–Ser-443 are cytoplasmic. Residues Ile-444 to Ser-469 traverse the membrane as a helical segment. Over Trp-470–Val-507 the chain is Extracellular. The segment at residues Ala-508–Ser-527 is an intramembrane region (helical). The Extracellular portion of the chain corresponds to Lys-528–Ile-566. Residues Gly-567–Thr-577 traverse the membrane as a helical segment. Residues Ser-578–Gly-590 are Cytoplasmic-facing. The helical transmembrane segment at Ala-591–Ser-613 threads the bilayer. The Extracellular portion of the chain corresponds to Ser-614–Phe-691.

The protein belongs to the concentrative nucleoside transporter (CNT) (TC 2.A.41) family. In terms of assembly, homotrimer. Expressed in pancreas, bone marrow, trachea, mammary gland, liver, prostate, and regions of intestine, brain, lung, placenta, testis, kidney, and heart.

The protein resides in the cell membrane. The protein localises to the endoplasmic reticulum membrane. The catalysed reaction is thymidine(out) + 2 Na(+)(out) = thymidine(in) + 2 Na(+)(in). It catalyses the reaction cytidine(out) + 2 Na(+)(out) = cytidine(in) + 2 Na(+)(in). The enzyme catalyses uridine(out) + 2 Na(+)(out) = uridine(in) + 2 Na(+)(in). It carries out the reaction adenosine(out) + 2 Na(+)(out) = adenosine(in) + 2 Na(+)(in). The catalysed reaction is guanosine(out) + 2 Na(+)(out) = guanosine(in) + 2 Na(+)(in). It catalyses the reaction inosine(out) + 2 Na(+)(out) = inosine(in) + 2 Na(+)(in). Its function is as follows. Sodium-dependent, pyrimidine- and purine-selective. Involved in the homeostasis of endogenous nucleosides. Exhibits the transport characteristics of the nucleoside transport system cib or N3 subtype (N3/cib) (with marked transport of both thymidine and inosine). Employs a 2:1 sodium/nucleoside ratio. Transports uridine. Also able to transport gemcitabine, 3'-azido-3'-deoxythymidine (AZT), ribavirin and 3-deazauridine. The chain is Solute carrier family 28 member 3 (SLC28A3) from Homo sapiens (Human).